The primary structure comprises 299 residues: GTPase Era (299 aa).

One can recognise an Era-type G domain in the interval 5–175 (RSGFVCFVGR…TDVLAGKLPP (171 aa)). The segment at 13–20 (GRPNTGKS) is G1. Residue 13–20 (GRPNTGKS) participates in GTP binding. Positions 39–43 (QTTRH) are G2. The segment at 60-63 (DTPG) is G3. GTP is bound by residues 60–64 (DTPGL) and 124–127 (TKID). The tract at residues 124–127 (TKID) is G4. The G5 stretch occupies residues 154-156 (VSA). In terms of domain architecture, KH type-2 spans 206-285 (VRDELPHSLA…YLDLRVKIAK (80 aa)).

The protein belongs to the TRAFAC class TrmE-Era-EngA-EngB-Septin-like GTPase superfamily. Era GTPase family. In terms of assembly, monomer.

The protein localises to the cell envelope. Its subcellular location is the secreted. It localises to the cell wall. Its function is as follows. Exhibits GTPase activity. Binds RNA but is probably not involved in ribosome assembly in mycobacteria. The protein is GTPase Era of Mycobacterium sp. (strain JLS).